Consider the following 370-residue polypeptide: Histidinol-phosphate aminotransferase 1 (370 aa).

An N6-(pyridoxal phosphate)lysine modification is found at Lys222.

The protein belongs to the class-II pyridoxal-phosphate-dependent aminotransferase family. Histidinol-phosphate aminotransferase subfamily. As to quaternary structure, homodimer. Requires pyridoxal 5'-phosphate as cofactor.

The enzyme catalyses L-histidinol phosphate + 2-oxoglutarate = 3-(imidazol-4-yl)-2-oxopropyl phosphate + L-glutamate. The protein operates within amino-acid biosynthesis; L-histidine biosynthesis; L-histidine from 5-phospho-alpha-D-ribose 1-diphosphate: step 7/9. This Bacillus cereus (strain ATCC 10987 / NRS 248) protein is Histidinol-phosphate aminotransferase 1.